Here is a 394-residue protein sequence, read N- to C-terminus: Elongation factor Tu 1 (394 aa).

Residues 10-204 enclose the tr-type G domain; sequence KPHVNVGTIG…ALDNYIPEPE (195 aa). Residues 19 to 26 form a G1 region; sequence GHVDHGKT. 19–26 is a GTP binding site; it reads GHVDHGKT. Thr-26 contributes to the Mg(2+) binding site. The segment at 60-64 is G2; the sequence is GITIS. The interval 81–84 is G3; it reads DCPG. GTP-binding positions include 81–85 and 136–139; these read DCPGH and NKCD. The interval 136–139 is G4; the sequence is NKCD. The tract at residues 174-176 is G5; it reads SAL.

It belongs to the TRAFAC class translation factor GTPase superfamily. Classic translation factor GTPase family. EF-Tu/EF-1A subfamily. In terms of assembly, monomer.

Its subcellular location is the cytoplasm. It carries out the reaction GTP + H2O = GDP + phosphate + H(+). Its function is as follows. GTP hydrolase that promotes the GTP-dependent binding of aminoacyl-tRNA to the A-site of ribosomes during protein biosynthesis. The polypeptide is Elongation factor Tu 1 (Photobacterium profundum (strain SS9)).